Here is a 157-residue protein sequence, read N- to C-terminus: Transcriptional repressor NrdR (157 aa).

Residues 3–34 (CPFCGHEDTQVKDSRPTDDGTAIRRRRSCTAC) fold into a zinc finger. One can recognise an ATP-cone domain in the interval 49-139 (LIVVKTDQRR…VYRNFSDAGD (91 aa)).

Belongs to the NrdR family. Requires Zn(2+) as cofactor.

Its function is as follows. Negatively regulates transcription of bacterial ribonucleotide reductase nrd genes and operons by binding to NrdR-boxes. In Granulibacter bethesdensis (strain ATCC BAA-1260 / CGDNIH1), this protein is Transcriptional repressor NrdR.